The sequence spans 231 residues: NADH-ubiquinone oxidoreductase chain 4 (231 aa).

6 helical membrane passes run 1–21, 34–54, 63–85, 89–111, 118–138, and 156–176; these read PIAG…YGII, LFLP…LTCL, IAYS…TPWG, AMAL…NTTY, ILIL…WWLL, and LLIM…LGLS.

The protein belongs to the complex I subunit 4 family.

The protein localises to the mitochondrion membrane. The enzyme catalyses a ubiquinone + NADH + 5 H(+)(in) = a ubiquinol + NAD(+) + 4 H(+)(out). Core subunit of the mitochondrial membrane respiratory chain NADH dehydrogenase (Complex I) that is believed to belong to the minimal assembly required for catalysis. Complex I functions in the transfer of electrons from NADH to the respiratory chain. The immediate electron acceptor for the enzyme is believed to be ubiquinone. This is NADH-ubiquinone oxidoreductase chain 4 (MT-ND4) from Ovophis okinavensis (Ryukyu Island pit viper).